Consider the following 185-residue polypeptide: Ribosome-recycling factor (185 aa).

Belongs to the RRF family.

Its subcellular location is the cytoplasm. Functionally, responsible for the release of ribosomes from messenger RNA at the termination of protein biosynthesis. May increase the efficiency of translation by recycling ribosomes from one round of translation to another. The chain is Ribosome-recycling factor from Geotalea daltonii (strain DSM 22248 / JCM 15807 / FRC-32) (Geobacter daltonii).